Here is a 149-residue protein sequence, read N- to C-terminus: Protegrin-1 (149 aa).

Residues 1-29 (METQRASLCLGRWSLWLLLLALVVPSASA) form the signal peptide. A propeptide spanning residues 30 to 130 (QALSYREAVL…DITCNEVQGV (101 aa)) is cleaved from the precursor. A disordered region spans residues 61–80 (DQPPKADEDPGTPKPVSFTV). 4 cysteine pairs are disulfide-bonded: cysteine 85–cysteine 96, cysteine 107–cysteine 124, cysteine 136–cysteine 145, and cysteine 138–cysteine 143. Position 148 is an arginine amide (arginine 148).

Belongs to the cathelicidin family.

It localises to the secreted. Microbicidal activity. Active against E.coli, Listeria monocytogenes and C.albicans, in vitro. This chain is Protegrin-1 (NPG1), found in Sus scrofa (Pig).